A 225-amino-acid polypeptide reads, in one-letter code: C-type lectin domain-containing protein 91 (225 aa).

Residues 1–21 (MRSTYILIIVPLIIIGGGVVA) form the signal peptide. The C-type lectin domain occupies 85-215 (YSDSCYFIET…CTMAFKSICE (131 aa)). Disulfide bonds link Cys-106/Cys-214 and Cys-185/Cys-206. Residue Asn-217 is glycosylated (N-linked (GlcNAc...) asparagine).

The protein localises to the secreted. This chain is C-type lectin domain-containing protein 91 (clec-91), found in Caenorhabditis elegans.